We begin with the raw amino-acid sequence, 337 residues long: Adenine deaminase (337 aa).

Zn(2+) contacts are provided by His14, His16, and His194. Catalysis depends on Glu197, which acts as the Proton donor. Asp275 is a binding site for Zn(2+). Asp276 is a substrate binding site.

This sequence belongs to the metallo-dependent hydrolases superfamily. Adenosine and AMP deaminases family. Adenine deaminase type 2 subfamily. Zn(2+) is required as a cofactor.

It carries out the reaction adenine + H2O + H(+) = hypoxanthine + NH4(+). Its function is as follows. Catalyzes the hydrolytic deamination of adenine to hypoxanthine. Plays an important role in the purine salvage pathway and in nitrogen catabolism. This is Adenine deaminase from Vibrio parahaemolyticus serotype O3:K6 (strain RIMD 2210633).